Reading from the N-terminus, the 120-residue chain is UPF0102 protein Caur_2698 (120 aa).

It belongs to the UPF0102 family.

The sequence is that of UPF0102 protein Caur_2698 from Chloroflexus aurantiacus (strain ATCC 29366 / DSM 635 / J-10-fl).